The primary structure comprises 511 residues: ATP synthase subunit alpha, mitochondrial (511 aa).

Residue 171-178 (GDRQTGKT) coordinates ATP.

This sequence belongs to the ATPase alpha/beta chains family. In terms of assembly, F-type ATPases have 2 components, CF(1) - the catalytic core - and CF(0) - the membrane proton channel. CF(1) has five subunits: alpha(3), beta(3), gamma(1), delta(1), epsilon(1). CF(0) has three main subunits: a, b and c.

It localises to the mitochondrion. The protein localises to the mitochondrion inner membrane. Its function is as follows. Mitochondrial membrane ATP synthase (F(1)F(0) ATP synthase or Complex V) produces ATP from ADP in the presence of a proton gradient across the membrane which is generated by electron transport complexes of the respiratory chain. F-type ATPases consist of two structural domains, F(1) - containing the extramembraneous catalytic core, and F(0) - containing the membrane proton channel, linked together by a central stalk and a peripheral stalk. During catalysis, ATP synthesis in the catalytic domain of F(1) is coupled via a rotary mechanism of the central stalk subunits to proton translocation. Subunits alpha and beta form the catalytic core in F(1). Rotation of the central stalk against the surrounding alpha(3)beta(3) subunits leads to hydrolysis of ATP in three separate catalytic sites on the beta subunits. Subunit alpha does not bear the catalytic high-affinity ATP-binding sites. This is ATP synthase subunit alpha, mitochondrial (ATPA) from Oenothera biennis (German evening primrose).